The following is a 1068-amino-acid chain: Probable ATPase FE772_23070 (1068 aa).

217–224 (GGGGAGKT) serves as a coordination point for ATP.

Its function is as follows. Involved in defense against bacteriophages. When this probable 4 gene operon (bGSDM-FE772_23060-FE772_23065-FE772_23070) is inserted into E.coli it provides nearly 100-fold protection against phages T5 and T6 and about 8-fold against phage T4. The operon without bGSDM no longer protects against phage. Probably a nucleotide hydrolase, possibly of ATP. This chain is Probable ATPase FE772_23070, found in Lysobacter enzymogenes.